We begin with the raw amino-acid sequence, 112 residues long: Nitrogen regulatory protein GlnK2 (112 aa).

ADP contacts are provided by residues Thr-29, 38–39, Val-64, and 87–90; these read QQ and GDGK. ATP-binding positions include Thr-29, 38–39, Val-64, 87–90, and 101–103; these read QQ, GDGK, and RIR.

It belongs to the P(II) protein family. In terms of assembly, homotrimer. Interacts and forms a complex with Amt2.

It is found in the cytoplasm. Binding of adenosine nucleotides results in distinct, cooperative behavior for ATP and ADP. GlnK2 is completely insensitive to 2-oxoglutarate at a low level of intracellular nitrogen. Involved in the regulation of nitrogen metabolism. Regulates the activity of its targets by protein-protein interaction in response to the nitrogen status of the cell. Regulates the activity of the ammonia channel Amt2 via direct interaction. This is Nitrogen regulatory protein GlnK2 from Archaeoglobus fulgidus (strain ATCC 49558 / DSM 4304 / JCM 9628 / NBRC 100126 / VC-16).